Here is a 121-residue protein sequence, read N- to C-terminus: Probable intron-encoded DNA endonuclease aI1 (121 aa).

It belongs to the LAGLIDADG endonuclease family.

It is found in the mitochondrion. Functionally, mitochondrial DNA endonuclease involved in intron homing. This chain is Probable intron-encoded DNA endonuclease aI1 (aI1), found in Mycosarcoma maydis (Corn smut fungus).